A 208-amino-acid polypeptide reads, in one-letter code: Ribosomal RNA large subunit methyltransferase E (208 aa).

Glycine 62, tryptophan 64, aspartate 82, aspartate 98, and aspartate 123 together coordinate S-adenosyl-L-methionine. Lysine 163 acts as the Proton acceptor in catalysis.

It belongs to the class I-like SAM-binding methyltransferase superfamily. RNA methyltransferase RlmE family.

The protein localises to the cytoplasm. The catalysed reaction is uridine(2552) in 23S rRNA + S-adenosyl-L-methionine = 2'-O-methyluridine(2552) in 23S rRNA + S-adenosyl-L-homocysteine + H(+). In terms of biological role, specifically methylates the uridine in position 2552 of 23S rRNA at the 2'-O position of the ribose in the fully assembled 50S ribosomal subunit. This chain is Ribosomal RNA large subunit methyltransferase E, found in Glaesserella parasuis serovar 5 (strain SH0165) (Haemophilus parasuis).